The chain runs to 382 residues: MATKRDYYEILGLPKDASVEDIKKTYRKLALQYHPDRNKDPGAEDKFKEISEAYAVLSDTEKRAQYDRFGHAGIDNQYSAEDIFRGADFGGFGDIFEMFFGGGRRGGPMGPRRGSDLQYDLYITFEEAAFGVRKDIDIPRTERCSTCSGTGAKPGTSPKRCPTCGGTGQVRTTRSTLGMQFISTTTCSTCHGRGQIIESPCPVCGGAGRVRNKRTITVNVPAGADSGMSLRLSGEGDSGEPGAPSGDLYIIIHVMEHRHFKRVDYDVISELSITFTQAALGADVMVDTLYGKVKMNIPAGTQTHSVFRLRDKGIQRLHGHGKGDQLVRVIIKTPTKLNQEQKELLRQFENLSKGKKPQEEEKSKAEKHKKGIFEKVKDAFES.

One can recognise a J domain in the interval D6–G70. Residues G131–K213 form a CR-type zinc finger. Zn(2+) contacts are provided by C144, C147, C161, C164, C187, C190, C201, and C204. CXXCXGXG motif repeat units follow at residues C144–G151, C161–G168, C187–G194, and C201–G208. Positions T146–G168 are disordered. Residues F348–S382 form a disordered region. A compositionally biased stretch (basic and acidic residues) spans G371–S382.

The protein belongs to the DnaJ family. Homodimer. Requires Zn(2+) as cofactor.

It localises to the cytoplasm. Participates actively in the response to hyperosmotic and heat shock by preventing the aggregation of stress-denatured proteins and by disaggregating proteins, also in an autonomous, DnaK-independent fashion. Unfolded proteins bind initially to DnaJ; upon interaction with the DnaJ-bound protein, DnaK hydrolyzes its bound ATP, resulting in the formation of a stable complex. GrpE releases ADP from DnaK; ATP binding to DnaK triggers the release of the substrate protein, thus completing the reaction cycle. Several rounds of ATP-dependent interactions between DnaJ, DnaK and GrpE are required for fully efficient folding. Also involved, together with DnaK and GrpE, in the DNA replication of plasmids through activation of initiation proteins. The protein is Chaperone protein DnaJ of Methanosarcina acetivorans (strain ATCC 35395 / DSM 2834 / JCM 12185 / C2A).